The chain runs to 96 residues: Protein TraA (96 aa).

This Escherichia coli protein is Protein TraA (traA).